A 156-amino-acid chain; its full sequence is MARSRGSSRPISRSRPTQTRSASTMAAPVHPQQQQQPNAYSHPPAAGAQTRQPGMFAQMASTAAGVAVGSTIGHTLGAGITGMFSGSGSDSAPVEQQQQNMANTSGQTQTDQQLGRTCEIDARNFTRCLDENNGNFQICDYYLQQLKACQEAARQY.

Residues 1-21 (MARSRGSSRPISRSRPTQTRS) constitute a mitochondrion transit peptide. Positions 1 to 21 (MARSRGSSRPISRSRPTQTRS) are enriched in low complexity. Disordered stretches follow at residues 1–50 (MARS…GAQT) and 78–110 (AGIT…QTQT). Polar residues predominate over residues 84 to 110 (FSGSGSDSAPVEQQQQNMANTSGQTQT). A CHCH domain is found at 115 to 156 (GRTCEIDARNFTRCLDENNGNFQICDYYLQQLKACQEAARQY). The Cx9C motif signature appears at 118-128 (CEIDARNFTRC). Cystine bridges form between Cys118–Cys149 and Cys128–Cys139.

It localises to the mitochondrion intermembrane space. This is Mitochondrial intermembrane space cysteine motif-containing protein MIX17 (MIX17) from Saccharomyces cerevisiae (strain ATCC 204508 / S288c) (Baker's yeast).